Here is a 346-residue protein sequence, read N- to C-terminus: 3 beta-hydroxysteroid dehydrogenase/Delta 5--&gt;4-isomerase (346 aa).

Residue Y147 is the Proton acceptor of the active site. K151 is an NAD(+) binding site.

The protein belongs to the 3-beta-HSD family.

It catalyses the reaction a 3beta-hydroxy-Delta(5)-steroid + NAD(+) = a 3-oxo-Delta(5)-steroid + NADH + H(+). The catalysed reaction is a 3-oxo-Delta(5)-steroid = a 3-oxo-Delta(4)-steroid. Its pathway is lipid metabolism; steroid biosynthesis. Catalyzes the oxidative conversion of Delta(5)-ene-3-beta-hydroxy steroid, and the oxidative conversion of ketosteroids. The 3-beta-HSD enzymatic system plays a crucial role in the biosynthesis of all classes of hormonal steroids. During viral infection, steroid production contributes to virulence by inhibiting the host inflammatory response. The sequence is that of 3 beta-hydroxysteroid dehydrogenase/Delta 5--&gt;4-isomerase (OPG174) from Monkeypox virus.